A 339-amino-acid chain; its full sequence is 4-hydroxy-2-oxovalerate aldolase (339 aa).

One can recognise a Pyruvate carboxyltransferase domain in the interval 7-257 (IRIMDTTLRD…QVGVDLYKIM (251 aa)). 15–16 (RD) provides a ligand contact to substrate. Asp-16 provides a ligand contact to Mn(2+). His-19 acts as the Proton acceptor in catalysis. Substrate is bound by residues Ser-169 and His-196. Residues His-196 and His-198 each contribute to the Mn(2+) site. Residue Tyr-286 participates in substrate binding.

This sequence belongs to the 4-hydroxy-2-oxovalerate aldolase family.

The enzyme catalyses (S)-4-hydroxy-2-oxopentanoate = acetaldehyde + pyruvate. The sequence is that of 4-hydroxy-2-oxovalerate aldolase from Pelotomaculum thermopropionicum (strain DSM 13744 / JCM 10971 / SI).